The chain runs to 209 residues: Casparian strip membrane protein 1 (209 aa).

Residues 1-46 (MEKSESTKIDVVETNKERKGKAPLLGKAPVVAAAVVHAKGGGAKRG) are Cytoplasmic-facing. A helical membrane pass occupies residues 47–67 (IAIFDLILRIAAFASALGAAV). The Extracellular segment spans residues 68–96 (AMATTEETLPFFTQFFQFEASYDDLPTFT). The chain crosses the membrane as a helical span at residues 97-117 (FFVVAMAIVVAYLVLSVPFSI). Over 118 to 129 (VCIVRPHAVVPR) the chain is Cytoplasmic. A helical membrane pass occupies residues 130-150 (LLLIIFDTVIIALTTGAAGSS). Residues 151–179 (AAIVYLAHNGNQDANWLAICQQFGDFCQR) are Extracellular-facing. Residues 180-200 (VSGAVVAAFVTVVILIFLVVL) traverse the membrane as a helical segment. Residues 201-209 (SASALRRHH) are Cytoplasmic-facing.

This sequence belongs to the Casparian strip membrane proteins (CASP) family. As to quaternary structure, homodimer and heterodimers.

It localises to the cell membrane. Regulates membrane-cell wall junctions and localized cell wall deposition. Required for establishment of the Casparian strip membrane domain (CSD) and the subsequent formation of Casparian strips, a cell wall modification of the root endodermis that determines an apoplastic barrier between the intraorganismal apoplasm and the extraorganismal apoplasm and prevents lateral diffusion. The chain is Casparian strip membrane protein 1 from Nicotiana tabacum (Common tobacco).